We begin with the raw amino-acid sequence, 713 residues long: Protein-glucosylgalactosylhydroxylysine glucosidase (713 aa).

A signal peptide spans 1 to 21 (MIINSQEYLQPPQWWNERVEA). N-linked (GlcNAc...) asparagine glycosylation is found at Asn104, Asn160, Asn171, Asn186, and Asn283. Residue 317–318 (WD) participates in substrate binding. An N-linked (GlcNAc...) asparagine glycan is attached at Asn361. Catalysis depends on Glu451, which acts as the Proton donor. N-linked (GlcNAc...) asparagine glycans are attached at residues Asn457 and Asn481. 521 to 522 (KQ) serves as a coordination point for substrate. Residues Asn535, Asn576, and Asn662 are each glycosylated (N-linked (GlcNAc...) asparagine).

The protein belongs to the glycosyl hydrolase 65 family.

It is found in the secreted. The catalysed reaction is (5R)-5-O-[alpha-D-glucosyl-(1-&gt;2)-beta-D-galactosyl]-5-hydroxy-L-lysyl-[collagen] + H2O = (5R)-5-O-(beta-D-galactosyl)-5-hydroxy-L-lysyl-[collagen] + D-glucose. Catalyzes the hydrolysis of glucose from the disaccharide unit linked to hydroxylysine residues of collagen and collagen-like proteins. This is Protein-glucosylgalactosylhydroxylysine glucosidase from Dictyostelium discoideum (Social amoeba).